The chain runs to 229 residues: Cilia- and flagella-associated protein 95 (229 aa).

At 1-123 (MDSLDRSCQD…LLNEETVSSG (123 aa)) the chain is on the extracellular side. N75 carries an N-linked (GlcNAc...) asparagine glycan. Residues 124-140 (IIERVTGLPATGFGAVF) traverse the membrane as a helical segment. Residues 141-229 (PRHPPDWSKM…PLTSGPIVPI (89 aa)) are Cytoplasmic-facing. The interval 153 to 163 (LTTYSEDYVPP) is mn.

As to quaternary structure, microtubule inner protein component of sperm flagellar doublet microtubules. Interacts with MYH9. Interacts with MYH10. Expressed in undifferentiated embryonic stem cells. Expressed in airway epithelial cells.

Its subcellular location is the cytoplasm. The protein resides in the cytoskeleton. The protein localises to the cilium axoneme. It is found in the flagellum axoneme. It localises to the cell membrane. Its function is as follows. Microtubule inner protein (MIP) part of the dynein-decorated doublet microtubules (DMTs) in cilia axoneme, which is required for motile cilia beating. In Homo sapiens (Human), this protein is Cilia- and flagella-associated protein 95.